A 358-amino-acid polypeptide reads, in one-letter code: Nicotinate-nucleotide--dimethylbenzimidazole phosphoribosyltransferase (358 aa).

The active-site Proton acceptor is glutamate 314.

Belongs to the CobT family.

The enzyme catalyses 5,6-dimethylbenzimidazole + nicotinate beta-D-ribonucleotide = alpha-ribazole 5'-phosphate + nicotinate + H(+). The protein operates within nucleoside biosynthesis; alpha-ribazole biosynthesis; alpha-ribazole from 5,6-dimethylbenzimidazole: step 1/2. Its function is as follows. Catalyzes the synthesis of alpha-ribazole-5'-phosphate from nicotinate mononucleotide (NAMN) and 5,6-dimethylbenzimidazole (DMB). The sequence is that of Nicotinate-nucleotide--dimethylbenzimidazole phosphoribosyltransferase from Mycobacterium marinum (strain ATCC BAA-535 / M).